A 193-amino-acid chain; its full sequence is Peptidyl-tRNA hydrolase (193 aa).

His17 is a binding site for tRNA. Residue His22 is the Proton acceptor of the active site. Phe68, Asn70, and Asn116 together coordinate tRNA.

This sequence belongs to the PTH family. Monomer.

It localises to the cytoplasm. It catalyses the reaction an N-acyl-L-alpha-aminoacyl-tRNA + H2O = an N-acyl-L-amino acid + a tRNA + H(+). Its function is as follows. Hydrolyzes ribosome-free peptidyl-tRNAs (with 1 or more amino acids incorporated), which drop off the ribosome during protein synthesis, or as a result of ribosome stalling. In terms of biological role, catalyzes the release of premature peptidyl moieties from peptidyl-tRNA molecules trapped in stalled 50S ribosomal subunits, and thus maintains levels of free tRNAs and 50S ribosomes. This chain is Peptidyl-tRNA hydrolase, found in Xanthomonas euvesicatoria pv. vesicatoria (strain 85-10) (Xanthomonas campestris pv. vesicatoria).